The primary structure comprises 455 residues: 23S rRNA (uracil(1939)-C(5))-methyltransferase RlmD (455 aa).

Positions 12–70 constitute a TRAM domain; that stretch reads SKQLSAKLSLSVTQLDHLGAGIAQHQGKIVFIPGVLPGETATVQFVEQKKSYAKAKLIS. The [4Fe-4S] cluster site is built by C83, C89, C92, and C174. Q288, F317, N322, E338, D365, and D385 together coordinate S-adenosyl-L-methionine. Residue C411 is the Nucleophile of the active site.

Belongs to the class I-like SAM-binding methyltransferase superfamily. RNA M5U methyltransferase family. RlmD subfamily.

The enzyme catalyses uridine(1939) in 23S rRNA + S-adenosyl-L-methionine = 5-methyluridine(1939) in 23S rRNA + S-adenosyl-L-homocysteine + H(+). Its function is as follows. Catalyzes the formation of 5-methyl-uridine at position 1939 (m5U1939) in 23S rRNA. In Shewanella frigidimarina (strain NCIMB 400), this protein is 23S rRNA (uracil(1939)-C(5))-methyltransferase RlmD.